The following is a 537-amino-acid chain: Cytochrome P450 monooxygenase alt2 (537 aa).

The helical transmembrane segment at H4 to I24 threads the bilayer. C474 contributes to the heme binding site.

This sequence belongs to the cytochrome P450 family. Heme is required as a cofactor.

The protein localises to the membrane. It participates in secondary metabolite biosynthesis. Functionally, cytochrome P450 monooxygenase; part of the gene cluster that mediates the biosynthesis of alternapyrone derivatives. Alternapyrone is a decaketide with octa-methylation from methionine on every C2 unit except the third unit. All the domains in the polyketide synthase alt5 are apparently involved in alternapyrone synthesis, that is, the 8 CMeT, 7 KR, 7 DH, and 4 ER reactions in the 9 KS-mediated condensation steps required for alternapyrone synthesis. the alternapyrone produced by alt5 might be intensively modified by cytochrome P450 monooxygenases alt1, alt2 and alt3 and FAD-dependent oxidoreductase alt4 present in the alt gene cluster. The chain is Cytochrome P450 monooxygenase alt2 from Alternaria solani.